Consider the following 113-residue polypeptide: Large ribosomal subunit protein bL17 (113 aa).

It belongs to the bacterial ribosomal protein bL17 family. As to quaternary structure, part of the 50S ribosomal subunit. Contacts protein L32.

In Clostridium kluyveri (strain NBRC 12016), this protein is Large ribosomal subunit protein bL17.